Here is a 536-residue protein sequence, read N- to C-terminus: Potassium voltage-gated channel protein shk-1 (536 aa).

Disordered regions lie at residues 1–31 (MRFG…NKEK) and 87–131 (AAEM…HPYT). The Cytoplasmic segment spans residues 1–275 (MRFGGQRRCI…EYPDSSLSAR (275 aa)). The segment covering 116–131 (QRGTPDTSSTQGHPYT) has biased composition (polar residues). Residues 276-296 (IIAFISIAVIALSIISFCWET) form a helical membrane-spanning segment. Over 297–322 (VPSDIEEKPINNSATAELLDEMDEKH) the chain is Extracellular. Residues 323–343 (YSPFFWIELMCILWFTIELIL) form a helical membrane-spanning segment. At 344 to 356 (RFISCPCKVTFAT) the chain is on the cytoplasmic side. The chain crosses the membrane as a helical span at residues 357–377 (SVLNIIDFVAIAPFFVNFFFA). Residues 378 to 425 (DTSKSNSSMSFAVLRVLRLVRVFRVFKLSRHSVGLQILGKTFRSSVQE) lie on the Extracellular side of the membrane. Residues 426 to 446 (FCLLIFFMAIALVLFASGMYF) form a helical; Voltage-sensor membrane-spanning segment. Topologically, residues 447-458 (AEQGEPNSKFTS) are cytoplasmic. The helical transmembrane segment at 459 to 479 (IPASFWFVLVTMTTVGYGDLV) threads the bilayer. The Extracellular segment spans residues 480–486 (PLSPFGK). The helical transmembrane segment at 487–507 (VVGGMCAMIGVLTLALPVPII) threads the bilayer. Over 508 to 536 (VANFKHFYRQENRLASMKSKGDDADDDIA) the chain is Cytoplasmic.

The protein belongs to the potassium channel family. A (Shaker) (TC 1.A.1.2) subfamily. Shaker sub-subfamily. In terms of tissue distribution, expressed in a variety of interneurons and sensory neurons, as well as body wall muscle.

Its subcellular location is the membrane. Its function is as follows. Mediates the voltage-dependent potassium ion permeability of excitable membranes. Has an important role in repolarization and in regulating the pattern of action potential firing. Isoform a expresses currents in a more depolarized voltage range than isoform d. The sequence is that of Potassium voltage-gated channel protein shk-1 from Caenorhabditis elegans.